The chain runs to 165 residues: 2-C-methyl-D-erythritol 2,4-cyclodiphosphate synthase (165 aa).

A divalent metal cation contacts are provided by Asp8 and His10. 4-CDP-2-C-methyl-D-erythritol 2-phosphate contacts are provided by residues 8-10 (DVH) and 34-35 (HS). His42 contacts a divalent metal cation. Residues 56-58 (DIG), 61-65 (FPDTD), 100-106 (AQAPKMA), 132-135 (TTTE), Phe139, and Arg142 each bind 4-CDP-2-C-methyl-D-erythritol 2-phosphate.

This sequence belongs to the IspF family. Homotrimer. The cofactor is a divalent metal cation.

The catalysed reaction is 4-CDP-2-C-methyl-D-erythritol 2-phosphate = 2-C-methyl-D-erythritol 2,4-cyclic diphosphate + CMP. The protein operates within isoprenoid biosynthesis; isopentenyl diphosphate biosynthesis via DXP pathway; isopentenyl diphosphate from 1-deoxy-D-xylulose 5-phosphate: step 4/6. Its function is as follows. Involved in the biosynthesis of isopentenyl diphosphate (IPP) and dimethylallyl diphosphate (DMAPP), two major building blocks of isoprenoid compounds. Catalyzes the conversion of 4-diphosphocytidyl-2-C-methyl-D-erythritol 2-phosphate (CDP-ME2P) to 2-C-methyl-D-erythritol 2,4-cyclodiphosphate (ME-CPP) with a corresponding release of cytidine 5-monophosphate (CMP). The polypeptide is 2-C-methyl-D-erythritol 2,4-cyclodiphosphate synthase (Pectobacterium atrosepticum (strain SCRI 1043 / ATCC BAA-672) (Erwinia carotovora subsp. atroseptica)).